A 239-amino-acid polypeptide reads, in one-letter code: Probable septum site-determining protein MinC (239 aa).

Belongs to the MinC family. Interacts with MinD and FtsZ.

Functionally, cell division inhibitor that blocks the formation of polar Z ring septums. Rapidly oscillates between the poles of the cell to destabilize FtsZ filaments that have formed before they mature into polar Z rings. Prevents FtsZ polymerization. The chain is Probable septum site-determining protein MinC from Colwellia psychrerythraea (strain 34H / ATCC BAA-681) (Vibrio psychroerythus).